Consider the following 450-residue polypeptide: Histidinol dehydrogenase (450 aa).

Residues tyrosine 135, glutamine 197, and asparagine 225 each contribute to the NAD(+) site. Residues threonine 248, glutamine 270, and histidine 273 each contribute to the substrate site. Residues glutamine 270 and histidine 273 each coordinate Zn(2+). Catalysis depends on proton acceptor residues glutamate 339 and histidine 340. Residues histidine 340, aspartate 373, glutamate 427, and histidine 432 each coordinate substrate. Residue aspartate 373 coordinates Zn(2+). Histidine 432 lines the Zn(2+) pocket.

This sequence belongs to the histidinol dehydrogenase family. It depends on Zn(2+) as a cofactor.

The catalysed reaction is L-histidinol + 2 NAD(+) + H2O = L-histidine + 2 NADH + 3 H(+). It functions in the pathway amino-acid biosynthesis; L-histidine biosynthesis; L-histidine from 5-phospho-alpha-D-ribose 1-diphosphate: step 9/9. In terms of biological role, catalyzes the sequential NAD-dependent oxidations of L-histidinol to L-histidinaldehyde and then to L-histidine. In Corynebacterium jeikeium (strain K411), this protein is Histidinol dehydrogenase.